Here is a 342-residue protein sequence, read N- to C-terminus: Sorting nexin-15 (342 aa).

One can recognise a PX domain in the interval 1 to 130; that stretch reads MSRQAKDDFL…EFFRGGEVTR (130 aa). A 1,2-diacyl-sn-glycero-3-phospho-(1D-myo-inositol-3-phosphate)-binding residues include Arg-51, Ser-53, Arg-87, and Arg-96. Arg-105 carries the omega-N-methylarginine modification. 2 positions are modified to phosphoserine: Ser-201 and Ser-227. The tract at residues 245–267 is disordered; that stretch reads DQEPWEPGGQEEEEDGEGGPTPA. One can recognise an MIT domain in the interval 265–342; sequence TPAYLSQATE…LRLHLSQLPP (78 aa).

The protein belongs to the sorting nexin family. Homodimer. Interacts with SNX1, SNX2 and SNX4. In terms of tissue distribution, widely expressed.

It localises to the cytoplasm. Its subcellular location is the membrane. The protein localises to the cytoplasmic vesicle membrane. May be involved in several stages of intracellular trafficking. Overexpression of SNX15 disrupts the normal trafficking of proteins from the plasma membrane to recycling endosomes or the TGN. The protein is Sorting nexin-15 (SNX15) of Homo sapiens (Human).